The following is a 274-amino-acid chain: NH(3)-dependent NAD(+) synthetase (274 aa).

Residue 46–53 (GISGGQDS) participates in ATP binding. Asp52 provides a ligand contact to Mg(2+). Arg140 contributes to the deamido-NAD(+) binding site. Thr160 serves as a coordination point for ATP. Mg(2+) is bound at residue Glu165. Deamido-NAD(+) is bound by residues Lys173 and Asp180. Residues Lys189 and Thr211 each contribute to the ATP site. A deamido-NAD(+)-binding site is contributed by 260 to 261 (HK).

The protein belongs to the NAD synthetase family. Homodimer.

The enzyme catalyses deamido-NAD(+) + NH4(+) + ATP = AMP + diphosphate + NAD(+) + H(+). Its pathway is cofactor biosynthesis; NAD(+) biosynthesis; NAD(+) from deamido-NAD(+) (ammonia route): step 1/1. Catalyzes the ATP-dependent amidation of deamido-NAD to form NAD. Uses ammonia as a nitrogen source. The chain is NH(3)-dependent NAD(+) synthetase from Streptococcus pneumoniae serotype 2 (strain D39 / NCTC 7466).